We begin with the raw amino-acid sequence, 910 residues long: Protein translocase subunit SecA (910 aa).

ATP is bound by residues Gln-89, 107 to 111, and Asp-502; that span reads GEGKT. Zn(2+)-binding residues include Cys-889, Cys-891, Cys-900, and His-901.

It belongs to the SecA family. In terms of assembly, monomer and homodimer. Part of the essential Sec protein translocation apparatus which comprises SecA, SecYEG and auxiliary proteins SecDF-YajC and YidC. Requires Zn(2+) as cofactor.

It localises to the cell inner membrane. It is found in the cytoplasm. It carries out the reaction ATP + H2O + cellular proteinSide 1 = ADP + phosphate + cellular proteinSide 2.. In terms of biological role, part of the Sec protein translocase complex. Interacts with the SecYEG preprotein conducting channel. Has a central role in coupling the hydrolysis of ATP to the transfer of proteins into and across the cell membrane, serving both as a receptor for the preprotein-SecB complex and as an ATP-driven molecular motor driving the stepwise translocation of polypeptide chains across the membrane. This chain is Protein translocase subunit SecA, found in Bartonella bacilliformis (strain ATCC 35685 / KC583 / Herrer 020/F12,63).